The primary structure comprises 380 residues: Crotonobetainyl-CoA reductase (380 aa).

This sequence belongs to the acyl-CoA dehydrogenase family. As to quaternary structure, homotetramer. It depends on FAD as a cofactor.

The protein localises to the cytoplasm. It catalyses the reaction 4-(trimethylamino)butanoyl-CoA + oxidized [electron-transfer flavoprotein] + H(+) = crotonobetainyl-CoA + reduced [electron-transfer flavoprotein]. It functions in the pathway amine and polyamine metabolism; carnitine metabolism. Catalyzes the reduction of crotonobetainyl-CoA to gamma-butyrobetainyl-CoA. This chain is Crotonobetainyl-CoA reductase, found in Escherichia coli O6:K15:H31 (strain 536 / UPEC).